A 71-amino-acid chain; its full sequence is Putative membrane protein insertion efficiency factor (71 aa).

The protein belongs to the UPF0161 family.

The protein resides in the cell inner membrane. In terms of biological role, could be involved in insertion of integral membrane proteins into the membrane. The chain is Putative membrane protein insertion efficiency factor from Nitrosospira multiformis (strain ATCC 25196 / NCIMB 11849 / C 71).